The chain runs to 427 residues: 12-alpha,13-alpha-dihydroxyfumitremorgin C prenyltransferase (427 aa).

Residue Glu-94 coordinates substrate. Dimethylallyl diphosphate is bound by residues Arg-105, Lys-192, Tyr-194, Tyr-268, Gln-353, Tyr-355, Tyr-419, and Tyr-423.

This sequence belongs to the tryptophan dimethylallyltransferase family.

The enzyme catalyses 12alpha,13alpha-dihydroxyfumitremorgin C + dimethylallyl diphosphate = fumitremorgin B + diphosphate. It participates in mycotoxin biosynthesis. Functionally, 12-alpha,13-alpha-dihydroxyfumitremorgin C prenyltransferase; part of the gene cluster that mediates the biosynthesis of fumitremorgins, indole alkaloids that carry not only intriguing chemical structures, but also interesting biological and pharmacological activities. The biosynthesis of fumitremorgin-type alkaloids begins by condensation of the two amino acids L-tryptophan and L-proline to brevianamide F, catalyzed by the non-ribosomal peptide synthetase ftmA. Brevianamide F is then prenylated by the prenyltransferase ftmPT1/ftmB in the presence of dimethylallyl diphosphate, resulting in the formation of tryprostatin B. The three cytochrome P450 monooxygenases, ftmP450-1/ftmC, ftmP450-2/ftmE and ftmP450-3/FtmG, are responsible for the conversion of tryprostatin B to 6-hydroxytryprostatin B, tryprostatin A to fumitremorgin C and fumitremorgin C to 12,13-dihydroxyfumitremorgin C, respectively. The putative methyltransferase ftmMT/ftmD is expected for the conversion of 6-hydroxytryprostatin B to tryprostatin A. FtmPT2/FtmH catalyzes the prenylation of 12,13-dihydroxyfumitre-morgin C in the presence of dimethylallyl diphosphate, resulting in the formation of fumitremorgin B. Fumitremorgin B is further converted to verruculogen by ftmOx1/ftmF via the insertion of an endoperoxide bond between the two prenyl moieties. In some fungal species, verruculogen is further converted to fumitremorgin A, but the enzymes involved in this step have not been identified yet. This chain is 12-alpha,13-alpha-dihydroxyfumitremorgin C prenyltransferase, found in Aspergillus fumigatus (strain ATCC MYA-4609 / CBS 101355 / FGSC A1100 / Af293) (Neosartorya fumigata).